Consider the following 774-residue polypeptide: Transmembrane GTPase fzo-1 (774 aa).

Residues 1 to 29 (MSGTASLVHTLPASGDSNHRGLHSLKNSR) form a disordered region. At 1–617 (MSGTASLVHT…EEQAMMTQMV (617 aa)) the chain is on the cytoplasmic side. Positions 20 to 29 (RGLHSLKNSR) are enriched in basic residues. Positions 51 to 71 (YGELKDNVAELEGVYKDIKEN) form a coiled coil. Residues 97–352 (QRDNMKVVFF…TRALEFQNFE (256 aa)) form the Dynamin-type G domain. A G1 motif region spans residues 107–114 (GRTSNGKS). Residue 110–115 (SNGKST) participates in GTP binding. The tract at residues 133–134 (TT) is G2 motif. The tract at residues 211–214 (DSPG) is G3 motif. Position 270–273 (270–273 (NRWD)) interacts with GTP. The segment at 270–273 (NRWD) is G4 motif. A region of interest (G5 motif) is located at residue glutamate 300. Serine 317 contacts GTP. Residues 385–415 (NLNSVLTSAAEQRSKLQNNLNESTRTFNECR) are a coiled coil. The helical transmembrane segment at 618 to 638 (LTSAAFLANGSLGVLVVGGIV) threads the bilayer. Over 639–640 (YK) the chain is Mitochondrial intermembrane. Residues 641 to 661 (AVGWRVIAVGGAAYAGLYAWE) form a helical membrane-spanning segment. Topologically, residues 662–774 (RMRWNSGAKE…YLRSDSPPTP (113 aa)) are cytoplasmic.

Belongs to the TRAFAC class dynamin-like GTPase superfamily. Dynamin/Fzo/YdjA family. Mitofusin subfamily. In terms of assembly, interacts with ced-9; interaction may be suppressed by interaction of ced-9 with egl-1.

It is found in the mitochondrion outer membrane. It carries out the reaction GTP + H2O = GDP + phosphate + H(+). Its function is as follows. Probable transmembrane GTPase. Mediates mitochondrial fusion. Fusion of mitochondria occurs in many cell types and constitutes an important step in mitochondria morphology, which is balanced between fusion and fission. Dispensable for normal apoptotic processes during embryonic development. The protein is Transmembrane GTPase fzo-1 of Caenorhabditis elegans.